The primary structure comprises 198 residues: Putative coiled-coil domain-containing protein 196 (198 aa).

Residues 24-117 (NYLKELNEDL…RKEMEMLWNK (94 aa)) adopt a coiled-coil conformation. 2 stretches are compositionally biased toward basic and acidic residues: residues 135 to 144 (NKTDLQDGKA) and 154 to 167 (TKNELETLCAEKGK). The tract at residues 135 to 198 (NKTDLQDGKA…VSGTSQHHSE (64 aa)) is disordered. Over residues 187 to 198 (GQVSGTSQHHSE) the composition is skewed to polar residues.

This Bos taurus (Bovine) protein is Putative coiled-coil domain-containing protein 196.